Reading from the N-terminus, the 446-residue chain is Probable arogenate/prephenate dehydrogenase (446 aa).

In terms of domain architecture, Prephenate/arogenate dehydrogenase spans 6 to 288 (LTISIIGGTD…SEAKRGAYYS (283 aa)).

It in the N-terminal section; belongs to the prephenate/arogenate dehydrogenase family.

This Methanocaldococcus jannaschii (strain ATCC 43067 / DSM 2661 / JAL-1 / JCM 10045 / NBRC 100440) (Methanococcus jannaschii) protein is Probable arogenate/prephenate dehydrogenase.